The primary structure comprises 331 residues: Ferredoxin--NADP reductase (331 aa).

FAD-binding residues include glutamate 38, glutamine 46, tyrosine 51, alanine 91, leucine 125, aspartate 282, and serine 323.

It belongs to the ferredoxin--NADP reductase type 2 family. In terms of assembly, homodimer. The cofactor is FAD.

The catalysed reaction is 2 reduced [2Fe-2S]-[ferredoxin] + NADP(+) + H(+) = 2 oxidized [2Fe-2S]-[ferredoxin] + NADPH. This chain is Ferredoxin--NADP reductase, found in Deinococcus geothermalis (strain DSM 11300 / CIP 105573 / AG-3a).